A 327-amino-acid chain; its full sequence is Diacylglycerol acyltransferase/mycolyltransferase Ag85B (327 aa).

Positions Met1–Ala38 are cleaved as a signal peptide. Substrate is bound at residue Leu80 to Arg81. Positions Phe96–Val106 are fibronectin-binding. Cysteines 125 and 130 form a disulfide. Substrate contacts are provided by Ser164 and Asp192. Ser164 (nucleophile) is an active-site residue. The active site involves Glu268. Substrate is bound by residues Phe270–Gly273, Lys277, and His300–Trp302. His300 is an active-site residue.

The protein belongs to the mycobacterial A85 antigen family.

It is found in the secreted. It catalyses the reaction 2 alpha,alpha'-trehalose 6-mycolate = alpha,alpha'-trehalose 6,6'-bismycolate + alpha,alpha-trehalose. It carries out the reaction an acyl-CoA + a 1,2-diacyl-sn-glycerol = a triacyl-sn-glycerol + CoA. In terms of biological role, the antigen 85 proteins (FbpA, FbpB, FbpC) are responsible for the high affinity of mycobacteria for fibronectin, a large adhesive glycoprotein, which facilitates the attachment of M.tuberculosis to murine alveolar macrophages (AMs). They also help to maintain the integrity of the cell wall by catalyzing the transfer of mycolic acids to cell wall arabinogalactan and through the synthesis of alpha,alpha-trehalose dimycolate (TDM, cord factor). They catalyze the transfer of a mycoloyl residue from one molecule of alpha,alpha-trehalose monomycolate (TMM) to another TMM, leading to the formation of TDM. The chain is Diacylglycerol acyltransferase/mycolyltransferase Ag85B (fbpB) from Mycobacterium leprae (strain TN).